Reading from the N-terminus, the 1235-residue chain is Myosin-1 (1235 aa).

The disordered stretch occupies residues 1–34 (MGITKRSKDKAARAERSAGGDKSSSAKPKKATFD). Positions 9 to 19 (DKAARAERSAG) are enriched in basic and acidic residues. The region spanning 41 to 715 (IGVSDLTLLS…TLFALEHMRD (675 aa)) is the Myosin motor domain. 134–141 (GESGAGKT) is an ATP binding site. The actin-binding stretch occupies residues 405 to 487 (SIGILDIYGF…PGIFSAMKDA (83 aa)). 2 IQ domains span residues 719-739 (HNMA…RAEA) and 740-765 (AIRI…EGHK). Residues 773–962 (RRRMSILGSR…TVHTQPGEPP (190 aa)) enclose the TH1 domain. 2 disordered regions span residues 949–1076 (YKSS…AAKP) and 1135–1235 (APPV…EDDW). A compositionally biased stretch (low complexity) spans 982–1046 (KGKLIKPGGP…PGAAATPAAA (65 aa)). The span at 1050-1062 (PSHTRQQSSTSTV) shows a compositional bias: polar residues. Positions 1063–1073 (RPPPPPPPAPA) are enriched in pro residues. One can recognise an SH3 domain in the interval 1075 to 1134 (KPKIMAKVLYDFAGTRENELSIKAGDMIEIVQKENNGWWLAKTPEGQAWVPAAYVEEQAP). Over residues 1135–1150 (APPVVAPRPPPPPPPA) the composition is skewed to pro residues. Positions 1180–1210 (SLQNRDSGMSLNGANGSGSDASRSSTPTPSI) are enriched in polar residues.

Belongs to the TRAFAC class myosin-kinesin ATPase superfamily. Myosin family.

It is found in the cytoplasm. It localises to the cytoskeleton. Its subcellular location is the actin patch. Type-I myosin implicated in the organization of the actin cytoskeleton. Required for proper actin cytoskeleton polarization. At the cell cortex, assembles in patch-like structures together with proteins from the actin-polymerizing machinery and promotes actin assembly. Functions as actin nucleation-promoting factor (NPF) for the Arp2/3 complex. This chain is Myosin-1 (myo-1), found in Neurospora crassa (strain ATCC 24698 / 74-OR23-1A / CBS 708.71 / DSM 1257 / FGSC 987).